A 230-amino-acid polypeptide reads, in one-letter code: Demethylmenaquinone methyltransferase (230 aa).

S-adenosyl-L-methionine-binding positions include Thr57, Asp77, 101–102 (DI), and Ser118.

The protein belongs to the class I-like SAM-binding methyltransferase superfamily. MenG/UbiE family.

The enzyme catalyses a 2-demethylmenaquinol + S-adenosyl-L-methionine = a menaquinol + S-adenosyl-L-homocysteine + H(+). The protein operates within quinol/quinone metabolism; menaquinone biosynthesis; menaquinol from 1,4-dihydroxy-2-naphthoate: step 2/2. In terms of biological role, methyltransferase required for the conversion of demethylmenaquinol (DMKH2) to menaquinol (MKH2). This Chlamydia felis (strain Fe/C-56) (Chlamydophila felis) protein is Demethylmenaquinone methyltransferase.